The primary structure comprises 20 residues: Hemocyanin subunit 6 (20 aa).

This sequence belongs to the tyrosinase family. Hemocyanin subfamily. Hemolymph.

It is found in the secreted. The protein localises to the extracellular space. Its function is as follows. Hemocyanins are copper-containing oxygen carriers occurring freely dissolved in the hemolymph of many mollusks and arthropods. This chain is Hemocyanin subunit 6, found in Homarus americanus (American lobster).